The primary structure comprises 371 residues: Regulatory protein RapK (371 aa).

TPR repeat units lie at residues 7–42, 93–130, 175–208, 215–248, 254–290, and 331–364; these read EVVA…FDEM, EYNF…IPDE, ATST…AKET, AQLF…ESWL, INSL…MENK, and DELS…EQKM.

The protein belongs to the Rap family.

Its subcellular location is the cytoplasm. Its activity is regulated as follows. Inhibited by PhrK, which prevents RapK-ComA interaction. In terms of biological role, involved in the regulation of genetic competence development. Inhibits the activity of ComA, a transcriptional factor that regulates the development of genetic competence. Likely affects the activity of additional regulators, in particular Spo0A. This Bacillus subtilis (strain 168) protein is Regulatory protein RapK (rapK).